The chain runs to 471 residues: Glutamate--tRNA ligase (471 aa).

Positions Pro-9–Gly-19 match the 'HIGH' region motif. The Zn(2+) site is built by Cys-98, Cys-100, Cys-125, and Asp-127. Positions Lys-237–Arg-241 match the 'KMSKS' region motif. Lys-240 provides a ligand contact to ATP.

It belongs to the class-I aminoacyl-tRNA synthetase family. Glutamate--tRNA ligase type 1 subfamily. As to quaternary structure, monomer. It depends on Zn(2+) as a cofactor.

The protein resides in the cytoplasm. The enzyme catalyses tRNA(Glu) + L-glutamate + ATP = L-glutamyl-tRNA(Glu) + AMP + diphosphate. Its function is as follows. Catalyzes the attachment of glutamate to tRNA(Glu) in a two-step reaction: glutamate is first activated by ATP to form Glu-AMP and then transferred to the acceptor end of tRNA(Glu). This is Glutamate--tRNA ligase from Yersinia pseudotuberculosis serotype IB (strain PB1/+).